The chain runs to 564 residues: 2-succinyl-5-enolpyruvyl-6-hydroxy-3-cyclohexene-1-carboxylate synthase (564 aa).

It belongs to the TPP enzyme family. MenD subfamily. Homodimer. It depends on Mg(2+) as a cofactor. The cofactor is Mn(2+). Requires thiamine diphosphate as cofactor.

It carries out the reaction isochorismate + 2-oxoglutarate + H(+) = 5-enolpyruvoyl-6-hydroxy-2-succinyl-cyclohex-3-ene-1-carboxylate + CO2. It functions in the pathway quinol/quinone metabolism; 1,4-dihydroxy-2-naphthoate biosynthesis; 1,4-dihydroxy-2-naphthoate from chorismate: step 2/7. It participates in quinol/quinone metabolism; menaquinone biosynthesis. Functionally, catalyzes the thiamine diphosphate-dependent decarboxylation of 2-oxoglutarate and the subsequent addition of the resulting succinic semialdehyde-thiamine pyrophosphate anion to isochorismate to yield 2-succinyl-5-enolpyruvyl-6-hydroxy-3-cyclohexene-1-carboxylate (SEPHCHC). In Vibrio vulnificus (strain CMCP6), this protein is 2-succinyl-5-enolpyruvyl-6-hydroxy-3-cyclohexene-1-carboxylate synthase.